The primary structure comprises 336 residues: Glycerol-3-phosphate dehydrogenase [NAD(P)+] (336 aa).

Positions 11, 12, 32, and 109 each coordinate NADPH. Lys-109, Gly-140, and Ser-142 together coordinate sn-glycerol 3-phosphate. Ala-144 contacts NADPH. Residues Lys-195, Asp-248, Ser-258, Arg-259, and Asn-260 each coordinate sn-glycerol 3-phosphate. Lys-195 serves as the catalytic Proton acceptor. Arg-259 provides a ligand contact to NADPH. NADPH-binding residues include Val-283 and Glu-285.

It belongs to the NAD-dependent glycerol-3-phosphate dehydrogenase family.

The protein localises to the cytoplasm. It catalyses the reaction sn-glycerol 3-phosphate + NAD(+) = dihydroxyacetone phosphate + NADH + H(+). The enzyme catalyses sn-glycerol 3-phosphate + NADP(+) = dihydroxyacetone phosphate + NADPH + H(+). The protein operates within membrane lipid metabolism; glycerophospholipid metabolism. In terms of biological role, catalyzes the reduction of the glycolytic intermediate dihydroxyacetone phosphate (DHAP) to sn-glycerol 3-phosphate (G3P), the key precursor for phospholipid synthesis. The sequence is that of Glycerol-3-phosphate dehydrogenase [NAD(P)+] from Leuconostoc mesenteroides subsp. mesenteroides (strain ATCC 8293 / DSM 20343 / BCRC 11652 / CCM 1803 / JCM 6124 / NCDO 523 / NBRC 100496 / NCIMB 8023 / NCTC 12954 / NRRL B-1118 / 37Y).